The chain runs to 568 residues: 2-succinyl-5-enolpyruvyl-6-hydroxy-3-cyclohexene-1-carboxylate synthase (568 aa).

This sequence belongs to the TPP enzyme family. MenD subfamily. In terms of assembly, homodimer. Mg(2+) serves as cofactor. Requires Mn(2+) as cofactor. The cofactor is thiamine diphosphate.

It catalyses the reaction isochorismate + 2-oxoglutarate + H(+) = 5-enolpyruvoyl-6-hydroxy-2-succinyl-cyclohex-3-ene-1-carboxylate + CO2. Its pathway is quinol/quinone metabolism; 1,4-dihydroxy-2-naphthoate biosynthesis; 1,4-dihydroxy-2-naphthoate from chorismate: step 2/7. The protein operates within quinol/quinone metabolism; menaquinone biosynthesis. Catalyzes the thiamine diphosphate-dependent decarboxylation of 2-oxoglutarate and the subsequent addition of the resulting succinic semialdehyde-thiamine pyrophosphate anion to isochorismate to yield 2-succinyl-5-enolpyruvyl-6-hydroxy-3-cyclohexene-1-carboxylate (SEPHCHC). This Haemophilus influenzae (strain PittEE) protein is 2-succinyl-5-enolpyruvyl-6-hydroxy-3-cyclohexene-1-carboxylate synthase.